Consider the following 29-residue polypeptide: Dermaseptin-1 (29 aa).

V29 carries the valine amide modification.

As to expression, expressed by the skin glands.

It localises to the secreted. In terms of biological role, antimicrobial peptide, active against the Gram-positive bacterium S.aureus, the Gram-negative bacteria E.coli and P.aeruginosa, and the yeasts C.albicans and P.brasiliensis. Has hemolytic activity (40% hemolysis at 128 ug/ml). The polypeptide is Dermaseptin-1 (Phyllomedusa tarsius (Brownbelly leaf frog)).